Consider the following 245-residue polypeptide: Thiopurine S-methyltransferase (245 aa).

Position 14 is a phosphoserine (Ser-14). An S-adenosyl-L-methionine-binding site is contributed by 29–40 (WQDKWVNGKTAF). Position 40 (Phe-40) interacts with substrate. An N6-acetyllysine modification is found at Lys-58. Residues Leu-69, Glu-90, 134-135 (SI), and Arg-152 each bind S-adenosyl-L-methionine.

It belongs to the class I-like SAM-binding methyltransferase superfamily. TPMT family. As to quaternary structure, monomer.

It localises to the cytoplasm. It carries out the reaction S-adenosyl-L-methionine + a thiopurine = S-adenosyl-L-homocysteine + a thiopurine S-methylether.. The catalysed reaction is mercaptopurine + S-adenosyl-L-methionine = 6-methylthiopurine + S-adenosyl-L-homocysteine + H(+). The enzyme catalyses 6-thioguanine + S-adenosyl-L-methionine = 6-methylthioguanine + S-adenosyl-L-homocysteine + H(+). With respect to regulation, inhibited by S-adenosyl-L-homocysteine (SAH). Functionally, catalyzes the S-methylation of thiopurine drugs such as 6-mercaptopurine (also called mercaptopurine, 6-MP or its brand name Purinethol) and 6-thioguanine (also called tioguanine or 6-TG) using S-adenosyl-L-methionine as the methyl donor. TPMT activity modulates the cytotoxic effects of thiopurine prodrugs. A natural substrate for this enzyme has yet to be identified. In Homo sapiens (Human), this protein is Thiopurine S-methyltransferase (TPMT).